Here is a 338-residue protein sequence, read N- to C-terminus: Cytosolic sulfotransferase 16 (338 aa).

81–86 (KTGTTW) provides a ligand contact to 3'-phosphoadenylyl sulfate. Residue His-143 is the Proton acceptor of the active site. Residues Arg-165, Ser-173, Tyr-231, and 301 to 303 (RKG) contribute to the 3'-phosphoadenylyl sulfate site.

The protein belongs to the sulfotransferase 1 family. As to expression, highly expressed in roots, stems and mature leaves. Low expression in young leaves and flowers. Barely detected in siliques.

Its subcellular location is the cytoplasm. The catalysed reaction is (Z)-desulfoglucotropeolin + 3'-phosphoadenylyl sulfate = (Z)-glucotropeolin + adenosine 3',5'-bisphosphate + H(+). The enzyme catalyses (Z)-indolylmethyl desulfoglucosinolate + 3'-phosphoadenylyl sulfate = (Z)-glucobrassicin + adenosine 3',5'-bisphosphate + H(+). Its activity is regulated as follows. Inhibited by phosphoadenosine 5'-phosphate (PAP). Its function is as follows. Sulfotransferase that utilizes 3'-phospho-5'-adenylyl sulfate (PAPS) as sulfonate donor to catalyze the sulfate conjugation of desulfo-glucosinolates (dsGSs), the final step in the biosynthesis of the glucosinolate core structure. Substrate preference is desulfo-2-phenylethyl glucosinolate &gt; desulfo-indol-3-yl methyl glucosinolate &gt; desulfo-benzyl glucosinolate &gt; desulfo-6-methylthiohexyl glucosinolate &gt; desulfo-4-methylthiobutyl glucosinolate &gt; desulfo-3-methylthiopropyl glucosinolate &gt; desulfo-singrin &gt; desulfo-3-butenyl glucosinolate. This is Cytosolic sulfotransferase 16 (SOT16) from Arabidopsis thaliana (Mouse-ear cress).